We begin with the raw amino-acid sequence, 113 residues long: Gigasin-5 (113 aa).

As to expression, component of the organic matrix of calcified shell layers.

This chain is Gigasin-5, found in Magallana gigas (Pacific oyster).